Here is an 83-residue protein sequence, read N- to C-terminus: Toxin BmKBT (83 aa).

The signal sequence occupies residues 1 to 19 (MKAALLLVIFSLMLIGVLT). Residues 21–81 (KSGYPTDHEG…TWSRATNKCR (61 aa)) enclose the LCN-type CS-alpha/beta domain. Disulfide bonds link cysteine 31/cysteine 80, cysteine 35/cysteine 54, cysteine 41/cysteine 61, and cysteine 45/cysteine 63. Lysine 83 is a propeptide (removed by a carboxypeptidase).

It belongs to the long (4 C-C) scorpion toxin superfamily. Sodium channel inhibitor family. Beta subfamily. As to expression, expressed by the venom gland.

The protein localises to the secreted. In terms of biological role, this toxin increases the peak sodium current, slows down the inactivation of sodium channels (Nav), and prolongs the action potential of dorsal root ganglion neurons, which indicates that it behaves as a classical alpha-toxin. It binds to mammal brain and insect sodium channels, but with a different manner. This peptide may bind to a distinct receptor site on mammal brain sodium channels, which is unconnected with that for BmKAS (a beta-toxin), BmKIT2 (a beta-toxin) or BmK I (an alpha toxin). In contrast, the receptor site for BmKabT on insect sodium channels might be closely related to that for the beta-insect depressant toxin BmKIT2. Possesses potent toxicity in mice but induces only paralysis in cotton bollworm. In Olivierus martensii (Manchurian scorpion), this protein is Toxin BmKBT.